The following is a 90-amino-acid chain: Small ribosomal subunit protein bS16 (90 aa).

This sequence belongs to the bacterial ribosomal protein bS16 family.

The chain is Small ribosomal subunit protein bS16 from Lactococcus lactis subsp. lactis (strain IL1403) (Streptococcus lactis).